We begin with the raw amino-acid sequence, 96 residues long: Co-chaperonin GroES (96 aa).

Belongs to the GroES chaperonin family. Heptamer of 7 subunits arranged in a ring. Interacts with the chaperonin GroEL.

Its subcellular location is the cytoplasm. Together with the chaperonin GroEL, plays an essential role in assisting protein folding. The GroEL-GroES system forms a nano-cage that allows encapsulation of the non-native substrate proteins and provides a physical environment optimized to promote and accelerate protein folding. GroES binds to the apical surface of the GroEL ring, thereby capping the opening of the GroEL channel. The sequence is that of Co-chaperonin GroES from Halorhodospira halophila (strain DSM 244 / SL1) (Ectothiorhodospira halophila (strain DSM 244 / SL1)).